The following is a 1045-amino-acid chain: E3 ubiquitin-protein ligase Topors (1045 aa).

The interval 1–35 is disordered; it reads MGSQPPLGSPLSREEGEAPPPAPASEGRRRSRRVR. Residues 1–195 form an E3 ubiquitin-protein ligase activity region; it reads MGSQPPLGSP…RERNASVYSP (195 aa). The required for DNA-binding stretch occupies residues 51–374; sequence ELAASAPARP…MAAFDQHANY (324 aa). Glycyl lysine isopeptide (Lys-Gly) (interchain with G-Cter in SUMO2) cross-links involve residues lysine 73, lysine 76, lysine 83, and lysine 88. A Phosphoserine modification is found at serine 98. The segment at 103 to 142 adopts an RING-type zinc-finger fold; the sequence is CPICLDRFDNVSYLDRCLHKFCFRCVQEWSKNKAECPLCK. Lysine 159 is covalently cross-linked (Glycyl lysine isopeptide (Lys-Gly) (interchain with G-Cter in SUMO2)). A Phosphoserine modification is found at serine 194. Residue lysine 249 forms a Glycyl lysine isopeptide (Lys-Gly) (interchain with G-Cter in SUMO2) linkage. The required for sumoylation and localization to discrete nuclear foci stretch occupies residues 437-574; it reads SLLNTSDSSD…STSLSSPRNL (138 aa). The interval 437-654 is interaction with SUMO1; the sequence is SLLNTSDSSD…RSRTRDSSWS (218 aa). Residues 442-475 form a disordered region; it reads SDSSDEELVTGGATSQIQGVQTNDDLNNDSDDSS. Residues 453–463 are compositionally biased toward polar residues; the sequence is GATSQIQGVQT. The interaction with p53/TP53 stretch occupies residues 456-731; the sequence is SQIQGVQTND…RRTLSRAHYS (276 aa). An interaction with TOP1 region spans residues 456 to 882; the sequence is SQIQGVQTND…GKATDTTKHH (427 aa). Residue serine 499 is modified to Phosphoserine. A disordered region spans residues 511–692; it reads ETVKTQEQEQ…RSRNRDRYYL (182 aa). Residues 521-534 show a composition bias toward low complexity; that stretch reads SYSSGDSDVSRCSS. Residues 539–565 show a composition bias toward basic and acidic residues; that stretch reads LGKDEQINKGHCDSSTRIKSKKEEKRS. Lysine 560 participates in a covalent cross-link: Glycyl lysine isopeptide (Lys-Gly) (interchain with G-Cter in SUMO). Residues 566-578 show a composition bias toward polar residues; sequence TSLSSPRNLNSSV. Serine 585 bears the Phosphoserine mark. Basic residues-rich tracts occupy residues 588–597, 613–630, and 637–647; these read NHRHRKRGRS, KNHR…KRSR, and PRGRRDKKRSR. Residues 654–669 show a composition bias toward low complexity; it reads SRRSQTLSLSSESTSR. Lysine 701 is covalently cross-linked (Glycyl lysine isopeptide (Lys-Gly) (interchain with G-Cter in SUMO2)). The segment at 713–936 is disordered; it reads RDGYESSYRR…DNSGPQDPLQ (224 aa). The residue at position 718 (serine 718) is a Phosphoserine; by PLK1. Basic residues predominate over residues 721–730; it reads RRRTLSRAHY. The span at 731–747 shows a compositional bias: polar residues; it reads SRQSSSPEFRVQSFSER. Serine 734 bears the Phosphoserine mark. 2 stretches are compositionally biased toward basic and acidic residues: residues 755 to 766 and 816 to 825; these read NHSERKYYYYER and FASKAKDSHY. Residues lysine 819 and lysine 837 each participate in a glycyl lysine isopeptide (Lys-Gly) (interchain with G-Cter in SUMO2) cross-link. Residues 854–863 are compositionally biased toward basic residues; it reads KHKRRKRKTR. Positions 854–917 are interaction with UBE2I; the sequence is KHKRRKRKTR…ITIDSDSDKD (64 aa). Residues serine 864 and serine 866 each carry the phosphoserine modification. Residues 880-897 are compositionally biased toward basic residues; it reads KHHKKKKKKHKKKHKKHH. Serine 912, serine 914, and serine 1028 each carry phosphoserine. Basic and acidic residues predominate over residues 913-923; sequence DSDKDSEVKED.

In terms of assembly, interacts with PARK7/DJ-1. Interacts with TOP1. Interacts with p53/TP53; can both ubiquitinate and sumoylate p53/TP53. Interacts with the SUMO1 conjugating enzyme UBE2I. Interacts with SUMO1. Interacts with NKX3-1; polyubiquitinates NKX3-1 and induces its proteasomal degradation. Interacts with SIN3A; sumoylates SIN3A. Interacts with IKBKE; induced by DNA damage. Phosphorylation at Ser-98 regulates the E3 ubiquitin-protein ligase activity but not the SUMO1-protein ligase activity. Phosphorylation at Ser-718 increases the E3 ubiquitin-protein ligase activity versus the SUMO1-protein ligase activity resulting in increased p53/TP53 ubiquitination and degradation. In terms of processing, sumoylated. Expressed at highest levels in testis and at lower levels in adrenal gland, bone marrow, brain, colon, heart, kidney, liver, muscle, ovary, pancreas, placenta, prostate, skeletal muscle, skin, small intestine, spleen, stomach, testis, thymus, thyroid and uterus. Expressed in the alveolar epithelium of the lung. Expression is commonly decreased in colon adenocarcinomas and lung cancers.

It localises to the nucleus. Its subcellular location is the PML body. The enzyme catalyses S-ubiquitinyl-[E2 ubiquitin-conjugating enzyme]-L-cysteine + [acceptor protein]-L-lysine = [E2 ubiquitin-conjugating enzyme]-L-cysteine + N(6)-ubiquitinyl-[acceptor protein]-L-lysine.. Functions as an E3 ubiquitin-protein ligase and as an E3 SUMO1-protein ligase. Probable tumor suppressor involved in cell growth, cell proliferation and apoptosis that regulates p53/TP53 stability through ubiquitin-dependent degradation. May regulate chromatin modification through sumoylation of several chromatin modification-associated proteins. May be involved in DNA damage-induced cell death through IKBKE sumoylation. The protein is E3 ubiquitin-protein ligase Topors (TOPORS) of Homo sapiens (Human).